The primary structure comprises 54 residues: MKKYQCIVCGWIYDEAEGWPQDGIAPGTKWEDIPDDWTCPDCGVSKVDFEMIEV.

The region spanning 1–54 is the Rubredoxin-like domain; that stretch reads MKKYQCIVCGWIYDEAEGWPQDGIAPGTKWEDIPDDWTCPDCGVSKVDFEMIEV. Residues Cys6, Cys9, Cys39, and Cys42 each coordinate Fe cation.

The protein belongs to the rubredoxin family. Requires Fe(3+) as cofactor.

The protein resides in the cytoplasm. It functions in the pathway hydrocarbon metabolism; alkane degradation. Involved in the hydrocarbon hydroxylating system, which transfers electrons from NADH to rubredoxin reductase and then through rubredoxin to alkane 1 monooxygenase. The chain is Rubredoxin (rubA) from Acinetobacter baylyi (strain ATCC 33305 / BD413 / ADP1).